The sequence spans 353 residues: Uroporphyrinogen decarboxylase (353 aa).

Residues 30-34 (RQAGR), Asp-79, Tyr-154, Ser-209, and His-332 contribute to the substrate site.

Belongs to the uroporphyrinogen decarboxylase family. In terms of assembly, homodimer.

Its subcellular location is the cytoplasm. The enzyme catalyses uroporphyrinogen III + 4 H(+) = coproporphyrinogen III + 4 CO2. It participates in porphyrin-containing compound metabolism; protoporphyrin-IX biosynthesis; coproporphyrinogen-III from 5-aminolevulinate: step 4/4. Functionally, catalyzes the decarboxylation of four acetate groups of uroporphyrinogen-III to yield coproporphyrinogen-III. The chain is Uroporphyrinogen decarboxylase from Mycobacterium marinum (strain ATCC BAA-535 / M).